Here is a 63-residue protein sequence, read N- to C-terminus: MKVSELKAKSIEELNAELLELLREQFNYRMQASTGQLAQTHLLRIVRRNIARVKTIITEKAGK.

It belongs to the universal ribosomal protein uL29 family.

In Colwellia psychrerythraea (strain 34H / ATCC BAA-681) (Vibrio psychroerythus), this protein is Large ribosomal subunit protein uL29.